A 203-amino-acid chain; its full sequence is Molybdenum cofactor guanylyltransferase (203 aa).

GTP contacts are provided by residues 12-14 (LAG), lysine 25, asparagine 53, aspartate 71, and aspartate 101. Aspartate 101 lines the Mg(2+) pocket.

It belongs to the MobA family. Monomer. Mg(2+) is required as a cofactor.

It localises to the cytoplasm. It carries out the reaction Mo-molybdopterin + GTP + H(+) = Mo-molybdopterin guanine dinucleotide + diphosphate. Its function is as follows. Transfers a GMP moiety from GTP to Mo-molybdopterin (Mo-MPT) cofactor (Moco or molybdenum cofactor) to form Mo-molybdopterin guanine dinucleotide (Mo-MGD) cofactor. The polypeptide is Molybdenum cofactor guanylyltransferase (Cupriavidus metallidurans (strain ATCC 43123 / DSM 2839 / NBRC 102507 / CH34) (Ralstonia metallidurans)).